A 961-amino-acid chain; its full sequence is RNA polymerase II subunit A C-terminal domain phosphatase (961 aa).

Position 1 is an N-acetylmethionine (methionine 1). Residues 178–344 (HRNRKLVLMV…SRESQTRKKV (167 aa)) enclose the FCP1 homology domain. The tract at residues 328 to 589 (DMNAPPGSRE…EEEDTDEDDH (262 aa)) is disordered. Residues 394 to 406 (DSPRPGKPDERDI) show a composition bias toward basic and acidic residues. Phosphoserine is present on serine 395. Residues 450-462 (LDFDLSSDSESSS) show a composition bias toward acidic residues. Low complexity predominate over residues 463–475 (ESEGTKSSSSASD). The span at 575–588 (SMEEEEEEDTDEDD) shows a compositional bias: acidic residues. Positions 629 to 728 (LKSKVLADVA…DKVEEQLFPL (100 aa)) constitute a BRCT domain. A phosphoserine mark is found at serine 674 and serine 740. Disordered stretches follow at residues 730 to 752 (DDHT…GVPP) and 780 to 949 (KLIR…ADEM). Residue lysine 780 is modified to N6-acetyllysine. Over residues 793-803 (SSSLPIRQEPS) the composition is skewed to polar residues. Serine 839 is subject to Phosphoserine. Over residues 850–859 (CKEDLESMDK) the composition is skewed to basic and acidic residues. Acidic residues-rich tracts occupy residues 860 to 873 (EVDD…DDSD) and 937 to 947 (NEDEGSSSEAD). 2 positions are modified to phosphoserine: serine 869 and serine 872.

Homodimer. Interacts with GTF2F1. Interacts with WDR77, SNRPB and SNRNP70. Phosphorylated. In the presence of TFIIF, the phosphorylated form has an increased CTD phosphatase activity. The phosphorylation is required for the physical interaction with GTF2F1. In terms of tissue distribution, ubiquitously expressed.

It is found in the nucleus. The protein localises to the cytoplasm. The protein resides in the cytoskeleton. Its subcellular location is the microtubule organizing center. It localises to the centrosome. It is found in the spindle pole. The protein localises to the midbody. The catalysed reaction is O-phospho-L-seryl-[protein] + H2O = L-seryl-[protein] + phosphate. It carries out the reaction O-phospho-L-threonyl-[protein] + H2O = L-threonyl-[protein] + phosphate. Processively dephosphorylates 'Ser-2' and 'Ser-5' of the heptad repeats YSPTSPS in the C-terminal domain of the largest RNA polymerase II subunit. This promotes the activity of RNA polymerase II. Plays a role in the exit from mitosis by dephosphorylating crucial mitotic substrates (USP44, CDC20 and WEE1) that are required for M-phase-promoting factor (MPF)/CDK1 inactivation. This Homo sapiens (Human) protein is RNA polymerase II subunit A C-terminal domain phosphatase (CTDP1).